The chain runs to 552 residues: Leiomodin-2 (552 aa).

Residues 1–47 are interaction with tropomyosin alpha; sequence MSTFGYRRELSKYEDIDEDELLASLTEEELKELERELEDIEPDRNLP. Interaction with actin regions lie at residues 1-169 and 170-498; these read MSTF…SSHV and RHKK…KEIK. The stretch at 13-46 forms a coiled coil; the sequence is YEDIDEDELLASLTEEELKELERELEDIEPDRNL. Disordered stretches follow at residues 33-67, 87-191, and 364-531; these read LERE…FSRE, GACE…DGKD, and MDKQ…DNLM. Positions 51–64 are enriched in polar residues; that stretch reads RQKSLTEKTPTGTF. Positions 86–151 form a coiled coil; the sequence is LGACEKDSEQ…DDEDEEKQNS (66 aa). Composition is skewed to acidic residues over residues 93 to 108 and 115 to 147; these read SEQE…EECF and VSEE…EDEE. Residues 364–377 are compositionally biased toward basic and acidic residues; the sequence is MDKQRQKRMQEQRQ. Low complexity predominate over residues 398-415; that stretch reads PRSSPYTSPKSSPWSSPK. Residues 425–450 are compositionally biased toward pro residues; it reads SQPPAPAPPPPPPPPPPPPPPPPPVI. Over residues 478–488 the composition is skewed to basic residues; sequence QKKKKGKKGKK. The segment covering 489-513 has biased composition (basic and acidic residues); that stretch reads HENSILKEIKDSLKSVSDRKSEEGS. The span at 514-524 shows a compositional bias: polar residues; the sequence is RPSTRPSTPQR. Residues 526–545 are interaction with actin 3; it reads LHDNLMEAIRASSIKQLRRV. Positions 526–545 constitute a WH2 domain; that stretch reads LHDNLMEAIRASSIKQLRRV.

The protein belongs to the tropomodulin family. As to quaternary structure, can bind at least three actin monomers and thereby provides a nucleus for actin filament formation. Interacts (via N-terminus) with tropomyosin alpha (TPM1) (via N-terminus). May also interact with TPM2 (via N-terminus).

It localises to the cytoplasm. It is found in the myofibril. The protein localises to the sarcomere. The protein resides in the m line. Its subcellular location is the cytoskeleton. Functionally, mediates nucleation of actin filaments and thereby promotes actin polymerization. Plays a role in the regulation of actin filament length. Required for normal sarcomere organization in the heart, and for normal heart function. The chain is Leiomodin-2 (LMOD2) from Gallus gallus (Chicken).